The primary structure comprises 377 residues: uncharacterized protein (377 aa).

An ATP-binding site is contributed by 32–39; that stretch reads GPINSGKT.

This sequence belongs to the archaeal ATPase family.

This is an uncharacterized protein from Methanocaldococcus jannaschii (strain ATCC 43067 / DSM 2661 / JAL-1 / JCM 10045 / NBRC 100440) (Methanococcus jannaschii).